A 564-amino-acid chain; its full sequence is Arginine--tRNA ligase (564 aa).

The 'HIGH' region motif lies at 122–132; that stretch reads PNIAKPFSIGH.

The protein belongs to the class-I aminoacyl-tRNA synthetase family. As to quaternary structure, monomer.

The protein localises to the cytoplasm. It catalyses the reaction tRNA(Arg) + L-arginine + ATP = L-arginyl-tRNA(Arg) + AMP + diphosphate. The sequence is that of Arginine--tRNA ligase from Lactococcus lactis subsp. lactis (strain IL1403) (Streptococcus lactis).